The sequence spans 195 residues: Imidazoleglycerol-phosphate dehydratase (195 aa).

Belongs to the imidazoleglycerol-phosphate dehydratase family.

The protein resides in the cytoplasm. It catalyses the reaction D-erythro-1-(imidazol-4-yl)glycerol 3-phosphate = 3-(imidazol-4-yl)-2-oxopropyl phosphate + H2O. It participates in amino-acid biosynthesis; L-histidine biosynthesis; L-histidine from 5-phospho-alpha-D-ribose 1-diphosphate: step 6/9. This is Imidazoleglycerol-phosphate dehydratase from Burkholderia thailandensis (strain ATCC 700388 / DSM 13276 / CCUG 48851 / CIP 106301 / E264).